The sequence spans 449 residues: uncharacterized protein (449 aa).

Residues 1–13 are compositionally biased toward basic residues; it reads MPKAPKTKLHHAP. A disordered region spans residues 1-125; it reads MPKAPKTKLH…SQEEEEYEEL (125 aa). Serine 22 carries the phosphoserine modification. The segment covering 73 to 84 has biased composition (polar residues); sequence KPSQISAFISNG. Residue serine 156 is modified to Phosphoserine.

This sequence belongs to the bystin family.

This is an uncharacterized protein from Schizosaccharomyces pombe (strain 972 / ATCC 24843) (Fission yeast).